We begin with the raw amino-acid sequence, 423 residues long: Serine hydroxymethyltransferase (423 aa).

(6S)-5,6,7,8-tetrahydrofolate is bound by residues L120 and 124–126; that span reads GHL. K229 bears the N6-(pyridoxal phosphate)lysine mark. Residue 353–355 participates in (6S)-5,6,7,8-tetrahydrofolate binding; sequence SPF.

This sequence belongs to the SHMT family. As to quaternary structure, homodimer. It depends on pyridoxal 5'-phosphate as a cofactor.

The protein localises to the cytoplasm. The catalysed reaction is (6R)-5,10-methylene-5,6,7,8-tetrahydrofolate + glycine + H2O = (6S)-5,6,7,8-tetrahydrofolate + L-serine. It functions in the pathway one-carbon metabolism; tetrahydrofolate interconversion. The protein operates within amino-acid biosynthesis; glycine biosynthesis; glycine from L-serine: step 1/1. In terms of biological role, catalyzes the reversible interconversion of serine and glycine with tetrahydrofolate (THF) serving as the one-carbon carrier. This reaction serves as the major source of one-carbon groups required for the biosynthesis of purines, thymidylate, methionine, and other important biomolecules. Also exhibits THF-independent aldolase activity toward beta-hydroxyamino acids, producing glycine and aldehydes, via a retro-aldol mechanism. The polypeptide is Serine hydroxymethyltransferase (Prochlorococcus marinus (strain MIT 9301)).